We begin with the raw amino-acid sequence, 466 residues long: Glutamate--tRNA ligase (466 aa).

The short motif at 10–20 (PSPTGYLHVGG) is the 'HIGH' region element. Residues Cys-99, Cys-101, Cys-126, and His-128 each contribute to the Zn(2+) site. The short motif at 237–241 (RLSKR) is the 'KMSKS' region element. Lys-240 contacts ATP.

This sequence belongs to the class-I aminoacyl-tRNA synthetase family. Glutamate--tRNA ligase type 1 subfamily. In terms of assembly, monomer. Zn(2+) serves as cofactor.

It is found in the cytoplasm. The catalysed reaction is tRNA(Glu) + L-glutamate + ATP = L-glutamyl-tRNA(Glu) + AMP + diphosphate. Its function is as follows. Catalyzes the attachment of glutamate to tRNA(Glu) in a two-step reaction: glutamate is first activated by ATP to form Glu-AMP and then transferred to the acceptor end of tRNA(Glu). The polypeptide is Glutamate--tRNA ligase (Trichlorobacter lovleyi (strain ATCC BAA-1151 / DSM 17278 / SZ) (Geobacter lovleyi)).